The primary structure comprises 344 residues: Enoyl-[acyl-carrier-protein] reductase, mitochondrial (344 aa).

The N-terminal 14 residues, 1 to 14 (MLKVLSLRSALQRA), are a transit peptide targeting the mitochondrion. The active-site Proton donor is the Tyr-69. NADP(+)-binding positions include Asn-142, 168 to 171 (NSAV), 191 to 193 (RSR), 255 to 258 (YGGM), 280 to 282 (FWM), and Lys-338.

Belongs to the zinc-containing alcohol dehydrogenase family. Quinone oxidoreductase subfamily. As to quaternary structure, homodimer.

It is found in the mitochondrion. It catalyses the reaction a 2,3-saturated acyl-[ACP] + NADP(+) = a (2E)-enoyl-[ACP] + NADPH + H(+). In terms of biological role, catalyzes the NADPH-dependent reduction of trans-2-enoyl thioesters in mitochondrial fatty acid synthesis (fatty acid synthesis type II). Fatty acid chain elongation in mitochondria uses acyl carrier protein (ACP) as an acyl group carrier, but the enzyme accepts both ACP and CoA thioesters as substrates in vitro. May provide the octanoyl chain used for lipoic acid biosynthesis, regulating protein lipoylation and mitochondrial respiratory activity. Involved in iron homeostasis; affecting Fe-S cluster assembly and ceramide metabolism. Required for proper morphology and bioenergetic functions of mitochondria. Required for maintenance of neurons. The protein is Enoyl-[acyl-carrier-protein] reductase, mitochondrial of Caenorhabditis elegans.